The chain runs to 1012 residues: MTKHPPNRRGISFEVGAQLEARDRLKNWYPAHIEDIDYEEGKVLIHFKRWNHRYDEWFCWDSPYLRPLEKIQLRKEGLHEEDGSSEFQINEQVLACWSDCRFYPAKVTAVNKDGTYTVKFYDGVVQTVKHIHVKAFSKDQNIVGNARPKETDHKSLSSSPDKREKFKEQRKATVNVKKDKEDKPLKTEKRPKQPDKEGKLICSEKGKVSEKSLPKNEKEDKENISENDREYSGDAQVDKKPENDIVKSPQENLREPKRKRGRPPSIAPTAVDSNSQTLQPITLELRRRKISKGCEVPLKRPRLDKNSSQEKSKNYSENTDKDLSRRRSSRLSTNGTHEILDPDLVVSDLVDTDPLQDTLSSTKESEEGQLKSALEAGQVSSALTCHSFGDGSGAAGLELNCPSMGENTMKTEPTSPLVELQEISTVEVTNTFKKTDDFGSSNAPAVDLDHKFRCKVVDCLKFFRKAKLLHYHMKYFHGMEKSLEPEESPGKRHVQTRGPSASDKPSQETLTRKRVSASSPTTKDKEKNKEKKFKEFVRVKPKKKKKKKKKTKPECPCSEEISDTSQEPSPPKAFAVTRCGSSHKPGVHMSPQLHGPESGHHKGKVKALEEDNLSESSSESFLWSDDEYGQDVDVTTNPDEELDGDDRYDFEVVRCICEVQEENDFMIQCEECQCWQHGVCMGLLEENVPEKYTCYVCQDPPGQRPGFKYWYDKEWLSRGHMHGLAFLEENYSHQNAKKIVATHQLLGDVQRVIEVLHGLQLKMSILQSREHPDLPLWCQPWKQHSGEGRSHFRNIPVTDTRSKEEAPSYRTLNGAVEKPRPLALPLPRSVEESYITSEHCYQKPRAYYPAVEQKLVVETRGSALDDAVNPLHENGDDSLSPRLGWPLDQDRSKGDSDPKPGSPKVKEYVSKKALPEEAPARKLLDRGGEGLLSSQHQWQFNLLTHVESLQDEVTHRMDSIEKELDVLESWLDYTGELEPPEPLARLPQLKHCIKQLLMDLGKVQQIALCCST.

Tudor domains follow at residues 4–69 and 83–147; these read HPPN…RPLE and GSSE…GNAR. Residues 142-336 form a disordered region; that stretch reads IVGNARPKET…RSSRLSTNGT (195 aa). The segment covering 147–245 has biased composition (basic and acidic residues); that stretch reads RPKETDHKSL…QVDKKPENDI (99 aa). Phosphoserine is present on Ser-159. Positions 257–269 form a DNA-binding region, a.T hook; the sequence is KRKRGRPPSIAPT. The segment covering 271–280 has biased composition (polar residues); it reads VDSNSQTLQP. Over residues 297–325 the composition is skewed to basic and acidic residues; the sequence is PLKRPRLDKNSSQEKSKNYSENTDKDLSR. A C2H2-type zinc finger spans residues 452-477; the sequence is FRCKVVDCLKFFRKAKLLHYHMKYFH. Positions 481–490 are enriched in basic and acidic residues; the sequence is KSLEPEESPG. A disordered region spans residues 481-611; it reads KSLEPEESPG…KGKVKALEED (131 aa). Ser-488 is modified (phosphoserine). The segment covering 497–509 has biased composition (polar residues); sequence RGPSASDKPSQET. Residues 522 to 538 show a composition bias toward basic and acidic residues; that stretch reads TKDKEKNKEKKFKEFVR. Over residues 539 to 551 the composition is skewed to basic residues; that stretch reads VKPKKKKKKKKKT. A PHD-type zinc finger spans residues 654–700; it reads RCICEVQEENDFMIQCEECQCWQHGVCMGLLEENVPEKYTCYVCQDP. At Lys-843 the chain carries N6-acetyllysine. The interval 866 to 912 is disordered; it reads DAVNPLHENGDDSLSPRLGWPLDQDRSKGDSDPKPGSPKVKEYVSKK. Ser-878 and Ser-880 each carry phosphoserine. Over residues 888–912 the composition is skewed to basic and acidic residues; it reads DQDRSKGDSDPKPGSPKVKEYVSKK.

Homodimer; disulfide-linked. Component of some MLL1/MLL complex, at least composed of the core components KMT2A/MLL1, ASH2L, HCFC1, WDR5 and RBBP5, as well as the facultative components BACC1, CHD8, E2F6, HSP70, INO80C, KANSL1, LAS1L, MAX, MCRS1, MGA, KAT8/MOF, PELP1, PHF20, PRP31, RING2, RUVB1/TIP49A, RUVB2/TIP49B, SENP3, TAF1, TAF4, TAF6, TAF7, TAF9 and TEX10. Component of the NSL complex at least composed of MOF/KAT8, KANSL1, KANSL2, KANSL3, MCRS1, PHF20, OGT1/OGT, WDR5 and HCFC1. Ubiquitinated by TRIM26; leading to proteasomal degradation. In terms of tissue distribution, expressed in heart, kidney, liver, lung, pancreas, placenta, spleen and testis. Not expressed in brain, skeletal muscle, colon, ovary, prostate, small intestine and thymus. Expressed in colon and ovary cancer cell lines while it is not expressed in the respective normal tissues.

The protein localises to the nucleus. In terms of biological role, methyllysine-binding protein, component of the MOF histone acetyltransferase protein complex. Not required for maintaining the global histone H4 'Lys-16' acetylation (H4K16ac) levels or locus specific histone acetylation, but instead works downstream in transcriptional regulation of MOF target genes. As part of the NSL complex it may be involved in acetylation of nucleosomal histone H4 on several lysine residues. Contributes to methyllysine-dependent p53/TP53 stabilization and up-regulation after DNA damage. The protein is PHD finger protein 20 (PHF20) of Homo sapiens (Human).